The sequence spans 102 residues: Putative septation protein SpoVG 2 (102 aa).

This sequence belongs to the SpoVG family.

In terms of biological role, could be involved in septation. The polypeptide is Putative septation protein SpoVG 2 (Listeria innocua serovar 6a (strain ATCC BAA-680 / CLIP 11262)).